A 160-amino-acid chain; its full sequence is UPF0178 protein PSPA7_5991 (160 aa).

It belongs to the UPF0178 family.

This Pseudomonas paraeruginosa (strain DSM 24068 / PA7) (Pseudomonas aeruginosa (strain PA7)) protein is UPF0178 protein PSPA7_5991.